Here is a 693-residue protein sequence, read N- to C-terminus: MARDFSLEKTRNIGIMAHIDAGKTTTTERILYYTGRIHKIGETHEGASQMDWMEQEQDRGITITSAATTAQWHDYRVNIIDTPGHVDFTVEVERSLRVLDGAVTVLDAQSGVEPQTETVWRQATTYGVPRIVFVNKMDKLGANFEYSVSTLHDRLQANAQPIQLPIGAEDEFEAIIDLVTMKCYQYNGDFGEEVVEIEIPDDYKDKAAEARESLIEAVAEANEDLMEKYLEGEEITIDELKAAIRQATLDIEFYPVLCGTAFKNKGVQLMLDAVIDYLPSPLDVKPIVGHHADNPDEEVIAPADDDADFAALAFKVMTDPYVGKLTFFRVYSGTLNSGSYVKNSTKDKRERVGRLLQMHANTRKEISTVYSGDIAAAVGLKETGTGDTLCGEKNDIILESMEFPEPVIHLSVEPKSKADQDKMTQALVKLQEEDPTFHAHTDEETGQVIIGGMGELHLDILVDRMKKEFNVEANVGAPMVSYRETFKTPAKVQGKFSRQSGGRGQYGDVHIEFTPNEVGAGFEFENAIVGGVVPREYIPSVEAGLKDAMENGVVAGYPLIDVKAKLYDGSYHDVDSSEMAFKIAASLALKEAAKVADPVILEPMMKVEILMPEEYMGDIMGDVTSRRGRVDGMEARGNAQMVRAFVPLSEMFGYATSLRSNTQGRGTYTMYFDHYEEVPKSIAEDIIKKNKGE.

In terms of domain architecture, tr-type G spans 8–282; it reads EKTRNIGIMA…AVIDYLPSPL (275 aa). GTP contacts are provided by residues 17-24, 81-85, and 135-138; these read AHIDAGKT, DTPGH, and NKMD.

The protein belongs to the TRAFAC class translation factor GTPase superfamily. Classic translation factor GTPase family. EF-G/EF-2 subfamily.

The protein resides in the cytoplasm. Functionally, catalyzes the GTP-dependent ribosomal translocation step during translation elongation. During this step, the ribosome changes from the pre-translocational (PRE) to the post-translocational (POST) state as the newly formed A-site-bound peptidyl-tRNA and P-site-bound deacylated tRNA move to the P and E sites, respectively. Catalyzes the coordinated movement of the two tRNA molecules, the mRNA and conformational changes in the ribosome. This Staphylococcus carnosus (strain TM300) protein is Elongation factor G.